A 179-amino-acid polypeptide reads, in one-letter code: Ribosome maturation factor RimM (179 aa).

The 77-residue stretch at 100–176 (KEEFHLLELI…FLIINPPNGL (77 aa)) folds into the PRC barrel domain.

This sequence belongs to the RimM family. As to quaternary structure, binds ribosomal protein uS19.

It is found in the cytoplasm. Functionally, an accessory protein needed during the final step in the assembly of 30S ribosomal subunit, possibly for assembly of the head region. Essential for efficient processing of 16S rRNA. May be needed both before and after RbfA during the maturation of 16S rRNA. It has affinity for free ribosomal 30S subunits but not for 70S ribosomes. This chain is Ribosome maturation factor RimM, found in Prochlorococcus marinus (strain AS9601).